Here is a 391-residue protein sequence, read N- to C-terminus: Bifunctional enzyme IspD/IspF (391 aa).

The interval 1–230 (MLAAGRGKRA…KKKMQMFPDI (230 aa)) is 2-C-methyl-D-erythritol 4-phosphate cytidylyltransferase. Residues 231-391 (RTGNGYDVHS…TVLYPGEIPK (161 aa)) form a 2-C-methyl-D-erythritol 2,4-cyclodiphosphate synthase region. Residues Asp-237 and His-239 each coordinate a divalent metal cation. Residues 237-239 (DVH) and 263-264 (HS) each bind 4-CDP-2-C-methyl-D-erythritol 2-phosphate. Residue His-271 participates in a divalent metal cation binding. 4-CDP-2-C-methyl-D-erythritol 2-phosphate-binding positions include 285-287 (DIG), 361-364 (TTNE), Phe-368, and Arg-371.

In the N-terminal section; belongs to the IspD/TarI cytidylyltransferase family. IspD subfamily. It in the C-terminal section; belongs to the IspF family. It depends on a divalent metal cation as a cofactor.

The catalysed reaction is 2-C-methyl-D-erythritol 4-phosphate + CTP + H(+) = 4-CDP-2-C-methyl-D-erythritol + diphosphate. It catalyses the reaction 4-CDP-2-C-methyl-D-erythritol 2-phosphate = 2-C-methyl-D-erythritol 2,4-cyclic diphosphate + CMP. The protein operates within isoprenoid biosynthesis; isopentenyl diphosphate biosynthesis via DXP pathway; isopentenyl diphosphate from 1-deoxy-D-xylulose 5-phosphate: step 2/6. It participates in isoprenoid biosynthesis; isopentenyl diphosphate biosynthesis via DXP pathway; isopentenyl diphosphate from 1-deoxy-D-xylulose 5-phosphate: step 4/6. Bifunctional enzyme that catalyzes the formation of 4-diphosphocytidyl-2-C-methyl-D-erythritol from CTP and 2-C-methyl-D-erythritol 4-phosphate (MEP) (IspD), and catalyzes the conversion of 4-diphosphocytidyl-2-C-methyl-D-erythritol 2-phosphate (CDP-ME2P) to 2-C-methyl-D-erythritol 2,4-cyclodiphosphate (ME-CPP) with a corresponding release of cytidine 5-monophosphate (CMP) (IspF). This is Bifunctional enzyme IspD/IspF from Bartonella quintana (strain Toulouse) (Rochalimaea quintana).